The primary structure comprises 909 residues: UPF0182 protein Moth_1139 (909 aa).

Helical transmembrane passes span 8 to 28 (FCLL…SHFL), 51 to 71 (VGIR…NLLF), 103 to 123 (LGIL…PLAA), 165 to 185 (LLIT…FIFN), 201 to 221 (LVHF…GFRL), 245 to 265 (LLPG…IIVL), and 277 to 297 (AGIL…PLAV). Residues 843–862 (PAPAASPQPPSQAATGSPGN) are disordered.

It belongs to the UPF0182 family.

It localises to the cell membrane. The sequence is that of UPF0182 protein Moth_1139 from Moorella thermoacetica (strain ATCC 39073 / JCM 9320).